A 128-amino-acid chain; its full sequence is MNLIQTLEQEEIARLNKTIPEFAPGDTVIVSVNVVEGNRKRVQAYEGVVIAKRNRGLNSGFTVRKISSGEGVERTFQTYSPLIASIEVKRRGDVRRAKLYYLRDRSGKSARIKEKLPSRVNKAAATAA.

This sequence belongs to the bacterial ribosomal protein bL19 family.

In terms of biological role, this protein is located at the 30S-50S ribosomal subunit interface and may play a role in the structure and function of the aminoacyl-tRNA binding site. The chain is Large ribosomal subunit protein bL19 from Paracidovorax citrulli (strain AAC00-1) (Acidovorax citrulli).